The sequence spans 234 residues: Large ribosomal subunit protein uL1 (234 aa).

Belongs to the universal ribosomal protein uL1 family. Part of the 50S ribosomal subunit.

In terms of biological role, binds directly to 23S rRNA. The L1 stalk is quite mobile in the ribosome, and is involved in E site tRNA release. Functionally, protein L1 is also a translational repressor protein, it controls the translation of the L11 operon by binding to its mRNA. This Vibrio atlanticus (strain LGP32) (Vibrio splendidus (strain Mel32)) protein is Large ribosomal subunit protein uL1.